The following is a 344-amino-acid chain: Heat-inducible transcription repressor HrcA (344 aa).

Belongs to the HrcA family.

In terms of biological role, negative regulator of class I heat shock genes (grpE-dnaK-dnaJ and groELS operons). Prevents heat-shock induction of these operons. The protein is Heat-inducible transcription repressor HrcA of Streptococcus pneumoniae serotype 19F (strain G54).